Consider the following 146-residue polypeptide: D-aminoacyl-tRNA deacylase (146 aa).

The Gly-cisPro motif, important for rejection of L-amino acids signature appears at 137-138; the sequence is GP.

This sequence belongs to the DTD family. In terms of assembly, homodimer.

The protein resides in the cytoplasm. It carries out the reaction glycyl-tRNA(Ala) + H2O = tRNA(Ala) + glycine + H(+). The catalysed reaction is a D-aminoacyl-tRNA + H2O = a tRNA + a D-alpha-amino acid + H(+). Its function is as follows. An aminoacyl-tRNA editing enzyme that deacylates mischarged D-aminoacyl-tRNAs. Also deacylates mischarged glycyl-tRNA(Ala), protecting cells against glycine mischarging by AlaRS. Acts via tRNA-based rather than protein-based catalysis; rejects L-amino acids rather than detecting D-amino acids in the active site. By recycling D-aminoacyl-tRNA to D-amino acids and free tRNA molecules, this enzyme counteracts the toxicity associated with the formation of D-aminoacyl-tRNA entities in vivo and helps enforce protein L-homochirality. This is D-aminoacyl-tRNA deacylase from Thermodesulfovibrio yellowstonii (strain ATCC 51303 / DSM 11347 / YP87).